Consider the following 963-residue polypeptide: TBC1 domain family member 2B (963 aa).

The segment at 1–30 (MPGAGARAEEGGGGGEGAAQGAAAEPGAGP) is disordered. The segment covering 19–30 (AQGAAAEPGAGP) has biased composition (low complexity). Residues 34 to 139 (PARLCGYLQK…WLQELQQKRW (106 aa)) form the PH domain. Residues serine 155 and serine 317 each carry the phosphoserine modification. Positions 272–348 (EKKKLTPEGN…EMQLQVQSQQ (77 aa)) are disordered. Residues 318–348 (GDPSSEGTSGSGSVSIRKPASEMQLQVQSQQ) show a composition bias toward low complexity. Positions 337-535 (ASEMQLQVQS…AKYSSLEAKL (199 aa)) form a coiled coil. A Phosphoserine modification is found at serine 473. In terms of domain architecture, Rab-GAP TBC spans 662–856 (GIPHEHRSKV…KIWDSFLYEG (195 aa)). Position 957 is a phosphoserine (serine 957).

It is found in the early endosome. Functionally, GTPase-activating protein that plays a role in the early steps of endocytosis. In Homo sapiens (Human), this protein is TBC1 domain family member 2B (TBC1D2B).